We begin with the raw amino-acid sequence, 263 residues long: Proteasome subunit beta type-5 (263 aa).

The propeptide at 1 to 59 (MALASVLERPLSVNRRGFFGLGGRADLLDLGPGSPSDGLSLAAPSWGVPEEPRIEILHG) is removed in mature form. Threonine 60 serves as the catalytic Nucleophile. Alanine 108 contributes to the bortezomib binding site.

The protein belongs to the peptidase T1B family. As to quaternary structure, the 26S proteasome consists of a 20S proteasome core and two 19S regulatory subunits. The 20S proteasome core is a barrel-shaped complex made of 28 subunits that are arranged in four stacked rings. The two outer rings are each formed by seven alpha subunits, and the two inner rings are formed by seven beta subunits. The proteolytic activity is exerted by three beta-subunits PSMB5, PSMB6 and PSMB7. Directly interacts with POMP. Interacts with ABCB1 and TAP1.

It localises to the cytoplasm. The protein localises to the nucleus. The catalysed reaction is Cleavage of peptide bonds with very broad specificity.. Its function is as follows. Component of the 20S core proteasome complex involved in the proteolytic degradation of most intracellular proteins. This complex plays numerous essential roles within the cell by associating with different regulatory particles. Associated with two 19S regulatory particles, forms the 26S proteasome and thus participates in the ATP-dependent degradation of ubiquitinated proteins. The 26S proteasome plays a key role in the maintenance of protein homeostasis by removing misfolded or damaged proteins that could impair cellular functions, and by removing proteins whose functions are no longer required. Associated with the PA200 or PA28, the 20S proteasome mediates ubiquitin-independent protein degradation. This type of proteolysis is required in several pathways including spermatogenesis (20S-PA200 complex) or generation of a subset of MHC class I-presented antigenic peptides (20S-PA28 complex). Within the 20S core complex, PSMB5 displays a chymotrypsin-like activity. This chain is Proteasome subunit beta type-5, found in Bos taurus (Bovine).